Here is a 256-residue protein sequence, read N- to C-terminus: tRNA-cytidine(32) 2-sulfurtransferase (256 aa).

Positions 35-40 (SGGKDS) match the PP-loop motif motif. Residues Cys-110, Cys-113, and Cys-201 each contribute to the [4Fe-4S] cluster site.

This sequence belongs to the TtcA family. In terms of assembly, homodimer. Requires Mg(2+) as cofactor. It depends on [4Fe-4S] cluster as a cofactor.

The protein localises to the cytoplasm. The enzyme catalyses cytidine(32) in tRNA + S-sulfanyl-L-cysteinyl-[cysteine desulfurase] + AH2 + ATP = 2-thiocytidine(32) in tRNA + L-cysteinyl-[cysteine desulfurase] + A + AMP + diphosphate + H(+). It participates in tRNA modification. Its function is as follows. Catalyzes the ATP-dependent 2-thiolation of cytidine in position 32 of tRNA, to form 2-thiocytidine (s(2)C32). The sulfur atoms are provided by the cysteine/cysteine desulfurase (IscS) system. The chain is tRNA-cytidine(32) 2-sulfurtransferase from Coxiella burnetii (strain Dugway 5J108-111).